The primary structure comprises 395 residues: Dual specificity mitogen-activated protein kinase kinase 1 (395 aa).

The segment at 1–24 (MPKKKPTPIQLNPNPEGTAVNGTP) is disordered. A compositionally biased stretch (polar residues) spans 9–24 (IQLNPNPEGTAVNGTP). The Protein kinase domain maps to 68–363 (FEKVSELGAG…LKQLMVHSFI (296 aa)). Residues 74–82 (LGAGNGGVV) and Lys-97 each bind ATP. Catalysis depends on Asp-190, which acts as the Proton acceptor. Ser-218 and Ser-222 each carry phosphoserine; by RAF. Residues 284-305 (ASSELAPRPRPPGRPISSYGPD) are disordered.

Belongs to the protein kinase superfamily. STE Ser/Thr protein kinase family. MAP kinase kinase subfamily. In terms of processing, activated by phosphorylation on Ser/Thr catalyzed by MAP kinase kinase kinases (RAF or MOS). As to expression, expressed in the central nervous system, kidney, liver, intestine and the hematopoietic system.

It localises to the cytoplasm. It is found in the cytoskeleton. The protein resides in the microtubule organizing center. Its subcellular location is the centrosome. The protein localises to the spindle pole body. It localises to the nucleus. It catalyses the reaction L-seryl-[protein] + ATP = O-phospho-L-seryl-[protein] + ADP + H(+). It carries out the reaction L-threonyl-[protein] + ATP = O-phospho-L-threonyl-[protein] + ADP + H(+). The enzyme catalyses L-tyrosyl-[protein] + ATP = O-phospho-L-tyrosyl-[protein] + ADP + H(+). Its function is as follows. Dual specificity protein kinase which acts as an essential component of the MAP kinase signal transduction pathway. Binding of extracellular ligands such as growth factors, cytokines and hormones to their cell-surface receptors activates the MAPK/ERK cascade, ultimately leading to phosphorylation of a threonine and a tyrosine residue in a Thr-Glu-Tyr sequence located in MAP kinases. Depending on the cellular context, this pathway mediates diverse biological functions such as cell growth, adhesion, survival and differentiation predominantly through the regulation of transcription, metabolism and cytoskeletal rearrangements. The protein is Dual specificity mitogen-activated protein kinase kinase 1 (map2k1) of Xenopus laevis (African clawed frog).